Consider the following 185-residue polypeptide: Ribosome-recycling factor (185 aa).

The protein belongs to the RRF family.

The protein localises to the cytoplasm. Its function is as follows. Responsible for the release of ribosomes from messenger RNA at the termination of protein biosynthesis. May increase the efficiency of translation by recycling ribosomes from one round of translation to another. The chain is Ribosome-recycling factor from Buchnera aphidicola subsp. Schizaphis graminum (strain Sg).